Reading from the N-terminus, the 215-residue chain is Urease accessory protein UreG (215 aa).

24-31 (GPVGSGKT) contacts GTP.

It belongs to the SIMIBI class G3E GTPase family. UreG subfamily. Homodimer. UreD, UreF and UreG form a complex that acts as a GTP-hydrolysis-dependent molecular chaperone, activating the urease apoprotein by helping to assemble the nickel containing metallocenter of UreC. The UreE protein probably delivers the nickel.

It localises to the cytoplasm. Its function is as follows. Facilitates the functional incorporation of the urease nickel metallocenter. This process requires GTP hydrolysis, probably effectuated by UreG. The protein is Urease accessory protein UreG of Burkholderia cenocepacia (strain HI2424).